Consider the following 301-residue polypeptide: ATP synthase gamma chain (301 aa).

It belongs to the ATPase gamma chain family. In terms of assembly, F-type ATPases have 2 components, CF(1) - the catalytic core - and CF(0) - the membrane proton channel. CF(1) has five subunits: alpha(3), beta(3), gamma(1), delta(1), epsilon(1). CF(0) has three main subunits: a, b and c.

It localises to the cell inner membrane. Produces ATP from ADP in the presence of a proton gradient across the membrane. The gamma chain is believed to be important in regulating ATPase activity and the flow of protons through the CF(0) complex. The chain is ATP synthase gamma chain from Helicobacter pylori (strain G27).